We begin with the raw amino-acid sequence, 818 residues long: Protein LDB19 (818 aa).

Residues Met1 to Gln25 form a disordered region. Phosphothreonine is present on Thr93. Over residues Gln352–Ser361 the composition is skewed to basic and acidic residues. The segment at Gln352–Leu374 is disordered. Ser384 is subject to Phosphoserine. The segment at Met388 to His436 is disordered. Residues Ala402–Asn413 show a composition bias toward polar residues. Over residues Leu416–Pro430 the composition is skewed to acidic residues. Lys486 is covalently cross-linked (Glycyl lysine isopeptide (Lys-Gly) (interchain with G-Cter in ubiquitin)). Disordered regions lie at residues Gln568 to Asn590 and Thr607 to Ile644. The residue at position 619 (Thr619) is a Phosphothreonine. Residues Pro620–Ser629 are compositionally biased toward polar residues. At Ser808 the chain carries Phosphoserine.

Belongs to the LDB19 family.

It localises to the cytoplasm. The protein resides in the golgi apparatus. Functionally, may be involved in protein-linked oligosaccharide phosphorylation since the deletion reduces the negative charge of the cell surface. Involved in the resistance to EDTA, cadmium chloride, cycloheximide, 6-dimethylaminopurine, methyl caffeate, beta-chloro-L-alanine, caffeine and cerulenin. The sequence is that of Protein LDB19 (LDB19) from Saccharomyces cerevisiae (strain ATCC 204508 / S288c) (Baker's yeast).